A 310-amino-acid chain; its full sequence is ADP-L-glycero-D-manno-heptose-6-epimerase (310 aa).

NADP(+)-binding positions include 10-11 (FI), 31-32 (DN), Lys-38, Lys-53, 75-79 (EGACS), and Asn-92. The Proton acceptor role is filled by Tyr-140. Lys-144 contacts NADP(+). Residue Asn-169 participates in substrate binding. NADP(+)-binding residues include Val-170 and Lys-178. Lys-178 (proton acceptor) is an active-site residue. Residues Ser-180, His-187, 201–204 (FEGS), Arg-209, and Tyr-272 contribute to the substrate site.

The protein belongs to the NAD(P)-dependent epimerase/dehydratase family. HldD subfamily. As to quaternary structure, homopentamer. NADP(+) serves as cofactor.

The enzyme catalyses ADP-D-glycero-beta-D-manno-heptose = ADP-L-glycero-beta-D-manno-heptose. It functions in the pathway nucleotide-sugar biosynthesis; ADP-L-glycero-beta-D-manno-heptose biosynthesis; ADP-L-glycero-beta-D-manno-heptose from D-glycero-beta-D-manno-heptose 7-phosphate: step 4/4. Functionally, catalyzes the interconversion between ADP-D-glycero-beta-D-manno-heptose and ADP-L-glycero-beta-D-manno-heptose via an epimerization at carbon 6 of the heptose. In Salmonella paratyphi C (strain RKS4594), this protein is ADP-L-glycero-D-manno-heptose-6-epimerase.